We begin with the raw amino-acid sequence, 316 residues long: MSDNRVYSYSAVLMGSPILLKLYSHDEALASRVFQLIKRYEDLLTVNRAESQVMDINHAAGRHPVTVSRPVFQLIQCAKAASMVRDSAFNLAIGPLVKLWRIGFHGHSVPDAADIRARLALTRPQEVILDETTCSVFLQQPGMELDLGAIAKGYIADRVRDYLRQQQVEKALINLGGNVHTLGEWTIGLKKPFADAQALIGSLTINGQSVVTSGTYERYFEQDGKRWHHILDPRSGYPLDNELDSVTVISTDSLDGDIWTTLLFGLGVEKGCAALRQREDIDAIFVTKNRDIILSSPQRLRFSPLDSGYQVIDCTA.

FAD is bound by residues M14, 88–90 (AFN), and D146. Position 149 (A149) interacts with Mg(2+). The FAD site is built by K152 and L231. Residues D257 and T261 each contribute to the Mg(2+) site.

The protein belongs to the ApbE family. Mg(2+) is required as a cofactor.

The protein localises to the cytoplasm. The enzyme catalyses L-threonyl-[protein] + FAD = FMN-L-threonyl-[protein] + AMP + H(+). Its function is as follows. Flavin transferase that catalyzes the transfer of the FMN moiety of FAD and its covalent binding to the hydroxyl group of a threonine residue in a target flavoprotein. Is responsible for the modification of the fumarate reductase KPK_2907. In Klebsiella pneumoniae (strain 342), this protein is FAD:protein FMN transferase.